Reading from the N-terminus, the 66-residue chain is MYKLKTNRAAAKRFKFTKSGKIKRGCAFRRHILEKKSPKMKHQSRGMHVIHETDYNRVEKLLPYGG.

It belongs to the bacterial ribosomal protein bL35 family.

This Leptospira biflexa serovar Patoc (strain Patoc 1 / Ames) protein is Large ribosomal subunit protein bL35.